Consider the following 959-residue polypeptide: MGLSEDLHARARTLMQTLESALNTPGSRGIGTANPTIYDTAWVAMVSREIDGKQVFVFPETFTYIYEHQEADGSWSGDGSLIDSIVNTLACLLALKMHESNASKPDIPARARAAQHYLNDALQRWDIMETERVAYEMIVPCLLKQLDTFGVSFTFPHRDLLYNMYAGKLAKLNWEAIYAKNSSLLHCMEAFVGVCDFDRMPHLLRDGNFMATPSTTAAYLMKATKWDDRAENYLRHVIEVYAPHGRDVVPNLWPMTFFEIVWSLSSLYDNNLDFAQMDPECLDRIALKLREFLVAGKGVLGFVPGTTHDADMSSKTLMLLQVLNHPYSHDEFVTEFEAPTYFRCYSFERNASVTVNSNCLMSLLHAPDVNKYESQIVKIATYVADVWWTSAGVVKDKWNVSEWYSSMLSSQALVRLLFEHGKGNLKSISEELLSKVSIACFTMISRILQSQKPDGSWGCAEETSYALITLANVASLPTCDLIRDHLNQVIESAKAFLTSIFYARPAAKPEDRVWIDKVTYSVESFRDAYLVSALNVPIPRFDPASITTLPPISQTLPKELAKFFGRLDMFKPAPDWRKLTWGIEATLMGPELNRVPSLTFEKVEKGANGKWFEFLPYMTIAPSGLQGTPISSQGMLDVLVLIRALYNTDDYLDMTLIKATNKDLNDLKKKIRDLFANPTSFSTLNEVPDDRMPTHIEVIERFAHSLLNYPRIQLASDNDKNLLRSEIEHYFLAGIAQCEENILLRERGLDKERVGTSHYRWTHVIGADNVAGTIALVFAFCLLGHQINEERGSRDLVDVFPTPVLKYLFNDCVMHFGAFSRLANDLHSISRDFNEVNLNSIMFSEFTGPKSGTDTEKAREAALLELVKYERKETDDAFEYLVQQLTPHVGAKRARDYINIIRVTYLHTALYDDLGRLTRADISNANREVSKGANGVKKTNGLTTNGTKATANGSNGIHH.

The class II diterpene cyclase stretch occupies residues 1–542 (MGLSEDLHAR…ALNVPIPRFD (542 aa)). The short motif at 309–312 (DADM) is the DXDD motif element. Asp311 serves as the catalytic For class II diterpene cyclase activity. The class I diterpene synthase stretch occupies residues 543–959 (PASITTLPPI…TANGSNGIHH (417 aa)). The active-site For class I diterpene synthase activity is the Asp649. Positions 649, 653, and 824 each coordinate Mg(2+). Positions 649–653 (DDYLD) match the DDXXD motif motif. Residues 931-959 (KGANGVKKTNGLTTNGTKATANGSNGIHH) form a disordered region. The segment covering 934 to 959 (NGVKKTNGLTTNGTKATANGSNGIHH) has biased composition (low complexity).

This sequence belongs to the terpene synthase family. Mg(2+) serves as cofactor.

It functions in the pathway secondary metabolite biosynthesis; terpenoid biosynthesis. In terms of biological role, bifunctional premutilin synthase; part of the gene cluster that mediates the biosynthesis of pleuromutilin, a tricyclic diterpene showing antibacterial properties. The geranylgeranyl diphosphate (GGPP) synthase ple4 catalyzes the first step in pleuromutilin biosynthesis. GGPP is then substrate of the premutilin synthase (PS) ple3 to yield premutilin. Premutilin synthase is a bifunctional enzyme composed of the fusion of a class II diterpene cyclase (DTC) and a class I diterpene synthase (DTS), with the corresponding domains and active sites containing characteristic aspartate-rich motifs. GGPP is first converted to mutildienyl-diphosphate (MPP) at the class II DTC site. MPP is subsequently further cyclized at the class I DTS site, followed by a 1,5-hydride shift and addition of water prior to terminating deprotonation, to yield premutilin. The cytochrome P450 monooxygenases ple5 and ple6 hydroxylate premutilin at C-11 and C-3, respectively, producing 11-hydroxypremutilin and 3-hydroxypremutilin. The combination of the actions of both ple5 and ple6 leads to the production of 3,11-dihydroxypremutilin. The short chain dehydrogenase ple7 further converts 3,11-dihydroxypremutilin into mutilin. The acetyltransferase ple2 then acetylates mutilin to produce 14-O-acetylmutilin. Finally, the cytochrome P450 monooxygenase ple1 catalyzes hydroxylation on the alpha position of the acetyl side chain of 14-O-acetylmutilin to yield pleuromutilin. The protein is Bifunctional premutilin synthase of Rhodocybe pseudopiperita (Clitopilus pseudopiperitus).